The sequence spans 245 residues: MLHFIQKVSGASSKMLKNPFTVRLGAGRIDILSLKTCLLQNFSSLPPRTWLSPSFQVCMRKIQCYHVSPCNFKKQKAVLPPKKRSTITYLLDSPKPALYITLAGLIPFTAPPLLMVITKSYIPVLAFTQMAYGAGFLAFLGGIRWGFVLPESSPAKPDYINLASSMSPILFSWAAILFSERLNEAIVTLIIGLGIALHNELFLLPHYPNWFKALRIVSTLVAFISFVVTLILENIYPEKGPKRPD.

The next 5 helical transmembrane spans lie at 97–117 (ALYI…LMVI), 122–142 (IPVL…FLGG), 159–179 (YINL…ILFS), 185–205 (AIVT…FLLP), and 216–236 (IVST…ENIY).

The protein resides in the membrane. This Mus musculus (Mouse) protein is Transmembrane protein 69 (Tmem69).